A 274-amino-acid polypeptide reads, in one-letter code: MQFSKMHGLGNDFVVVDAVTQNVYFPTEVIKRLADRNRGIGFDQLLVVEPPYDPDLDFHYRIFNADGSEVSQCGNGARCFARFVVLKGLTDKKEIAVSTAKGKMMLRVKDDDMVCVNMGEPIWEPNKIPFNANKFEKNYIIRTDIQTLLCGVVSMGNPHCVTQVEDIQHANIEILGPLLESHERFPERVNAGFMQIINRNHIKLRVYERGAGETQACGSGACAAVAVGIMQGVLDNNVQVDLPGGRLMIEWQGKGHPLYMTGEATHIYDGVIRL.

3 residues coordinate substrate: N11, Q44, and N64. The active-site Proton donor is the C73. Residues G74 to N75, N157, N190, and E208 to R209 each bind substrate. C217 functions as the Proton acceptor in the catalytic mechanism. Residue G218–S219 coordinates substrate.

It belongs to the diaminopimelate epimerase family. Homodimer.

It localises to the cytoplasm. The enzyme catalyses (2S,6S)-2,6-diaminopimelate = meso-2,6-diaminopimelate. The protein operates within amino-acid biosynthesis; L-lysine biosynthesis via DAP pathway; DL-2,6-diaminopimelate from LL-2,6-diaminopimelate: step 1/1. In terms of biological role, catalyzes the stereoinversion of LL-2,6-diaminopimelate (L,L-DAP) to meso-diaminopimelate (meso-DAP), a precursor of L-lysine and an essential component of the bacterial peptidoglycan. This Histophilus somni (strain 129Pt) (Haemophilus somnus) protein is Diaminopimelate epimerase.